The following is a 284-amino-acid chain: uncharacterized protein (284 aa).

Residues 1–8 lie on the Cytoplasmic side of the membrane; that stretch reads MLWKVSKM. The chain crosses the membrane as a helical span at residues 9–25; it reads FLGGLVALTTISVATLY. Over 26 to 80 the chain is Extracellular; the sequence is HYQNRLVYPSWAQGARNHVDTPDSRGIPYEKLTLITQDHIKLEAWDIKNENSTST. The helical transmembrane segment at 81–101 threads the bilayer; it reads VLILCPNAGNIGYFILIIDIF. At 102–284 the chain is on the cytoplasmic side; sequence YRQFGMSVFI…RDFLIEKGFI (183 aa).

This sequence to S.pombe bem46 and M.tuberculosis Rv2307c.

The protein resides in the mitochondrion membrane. This is an uncharacterized protein from Saccharomyces cerevisiae (strain ATCC 204508 / S288c) (Baker's yeast).